The sequence spans 498 residues: Probable cytosol aminopeptidase (498 aa).

Lys-264 and Asp-269 together coordinate Mn(2+). Lys-276 is an active-site residue. Asp-287, Asp-346, and Glu-348 together coordinate Mn(2+). Arg-350 is an active-site residue.

The protein belongs to the peptidase M17 family. It depends on Mn(2+) as a cofactor.

It localises to the cytoplasm. The catalysed reaction is Release of an N-terminal amino acid, Xaa-|-Yaa-, in which Xaa is preferably Leu, but may be other amino acids including Pro although not Arg or Lys, and Yaa may be Pro. Amino acid amides and methyl esters are also readily hydrolyzed, but rates on arylamides are exceedingly low.. It catalyses the reaction Release of an N-terminal amino acid, preferentially leucine, but not glutamic or aspartic acids.. Its function is as follows. Presumably involved in the processing and regular turnover of intracellular proteins. Catalyzes the removal of unsubstituted N-terminal amino acids from various peptides. The sequence is that of Probable cytosol aminopeptidase from Xanthobacter autotrophicus (strain ATCC BAA-1158 / Py2).